We begin with the raw amino-acid sequence, 565 residues long: Oxygen-dependent choline dehydrogenase (565 aa).

An FAD-binding site is contributed by 7-36 (DYIICGAGSAGNVLATRLTEDPGVTVLLLE). Residue histidine 474 is the Proton acceptor of the active site.

Belongs to the GMC oxidoreductase family. FAD is required as a cofactor.

The catalysed reaction is choline + A = betaine aldehyde + AH2. It carries out the reaction betaine aldehyde + NAD(+) + H2O = glycine betaine + NADH + 2 H(+). It participates in amine and polyamine biosynthesis; betaine biosynthesis via choline pathway; betaine aldehyde from choline (cytochrome c reductase route): step 1/1. Its function is as follows. Involved in the biosynthesis of the osmoprotectant glycine betaine. Catalyzes the oxidation of choline to betaine aldehyde and betaine aldehyde to glycine betaine at the same rate. The polypeptide is Oxygen-dependent choline dehydrogenase (Burkholderia pseudomallei (strain 1710b)).